Here is a 1657-residue protein sequence, read N- to C-terminus: A disintegrin and metalloproteinase with thrombospondin motifs 7 (1657 aa).

Residues 1-20 form the signal peptide; sequence MHRGPSLLLILCALASRVLG. A propeptide spanning residues 21-220 is cleaved from the precursor; sequence PASGLVTEGR…QQQQKRRQQR (200 aa). Residue N84 is glycosylated (N-linked (GlcNAc...) asparagine). Positions 165–221 are disordered; it reads PGHAQPHVVYKHQGSRKQAQQGDSRPSGTCGMQVPPDLEQQREHWEQQQQKRRQQRS. Residues 180 to 191 show a composition bias toward polar residues; sequence RKQAQQGDSRPS. Positions 192 to 199 match the Cysteine switch motif; it reads GTCGMQVP. Position 194 (C194) interacts with Zn(2+). The 212-residue stretch at 226 to 437 folds into the Peptidase M12B domain; it reads KWVETLVVAD…GWGLCLDDRP (212 aa). 11 disulfide bridges follow: C302–C356, C331–C338, C350–C432, C389–C416, C459–C482, C470–C488, C477–C507, C501–C512, C535–C572, C539–C577, and C550–C562. Residue H372 participates in Zn(2+) binding. E373 is a catalytic residue. 2 residues coordinate Zn(2+): H376 and H382. The 76-residue stretch at 447–522 folds into the Disintegrin domain; the sequence is VLPGVLYDVN…VPEGFQPEAV (76 aa). The TSP type-1 1 domain occupies 523–578; the sequence is DGGWSGWSAWSDCSRSCGVGVRSSERQCTQPVPKNRGKYCVGERKRSQLCNLPACP. An N-linked (GlcNAc...) asparagine glycan is attached at N622. A spacer region spans residues 683-794; it reads QTVSRTFKET…PGVHYQYTIQ (112 aa). 3 consecutive TSP type-1 domains span residues 804–863, 864–923, and 925–978; these read PEFS…EPCP, PRWW…NRHV, and CPST…QPCQ. 5 disordered regions span residues 1009–1034, 1073–1127, 1140–1237, 1283–1304, and 1317–1384; these read LAPRPSPASSPKPVSISNAIDEEELD, GGWT…GLEQ, EDTP…DVVE, GRDSPLEPGTPTFSSPELSSQH, and TVPT…ARNA. Residues 1211 to 1224 show a composition bias toward pro residues; that stretch reads PQSPIPTQPSPPSI. Composition is skewed to polar residues over residues 1293-1304 and 1327-1342; these read PTFSSPELSSQH and PSGQPQTPNLEGTQSP. TSP type-1 domains are found at residues 1366–1414, 1417–1477, 1479–1522, and 1524–1584; these read QPSL…SGND, CTLA…CQPG, TKPP…PEPG, and CEES…LCSH. The 41-residue stretch at 1587-1627 folds into the PLAC domain; sequence WPESSRPCATEDCELVEPPRCERDRLSFNFCETLRLLGRCQ.

As to quaternary structure, interacts with COMP. Zn(2+) serves as cofactor. N-glycosylated. Can be O-fucosylated by POFUT2 on a serine or a threonine residue found within the consensus sequence C1-X(2)-(S/T)-C2-G of the TSP type-1 repeat domains where C1 and C2 are the first and second cysteine residue of the repeat, respectively. Fucosylated repeats can then be further glycosylated by the addition of a beta-1,3-glucose residue by the glucosyltransferase, B3GALTL. Fucosylation mediates the efficient secretion of ADAMTS family members. Can also be C-glycosylated with one or two mannose molecules on tryptophan residues within the consensus sequence W-X-X-W of the TPRs. N- and C-glycosylations can also facilitate secretion. In terms of processing, O-glycosylated proteoglycan; contains chondroitin sulfate. Post-translationally, may be cleaved by a furin endopeptidase. The precursor is sequentially processed.

Its subcellular location is the secreted. It localises to the extracellular space. The protein resides in the extracellular matrix. Functionally, metalloprotease. Was previously shown to degrade COMP. However, a later study found no activity against COMP. This is A disintegrin and metalloproteinase with thrombospondin motifs 7 (Adamts7) from Mus musculus (Mouse).